The primary structure comprises 1009 residues: DNA ligase 4 (1009 aa).

Disordered stretches follow at residues 1–34 (METD…APTL) and 51–72 (KKKP…LSAA). A compositionally biased stretch (basic residues) spans 51–65 (KKKPVGPAGNRRKAG). Residues E315, K317, L318, R322, E384, F424, E484, K489, K506, and K508 each coordinate ATP. Catalysis depends on K317, which acts as the N6-AMP-lysine intermediate. Position 384 (E384) interacts with Mg(2+). Mg(2+) is bound at residue E484. 2 BRCT domains span residues 715-808 (PSGH…PDLL) and 887-995 (PCGW…QHMP).

The protein belongs to the ATP-dependent DNA ligase family. Mg(2+) serves as cofactor.

It is found in the nucleus. It carries out the reaction ATP + (deoxyribonucleotide)n-3'-hydroxyl + 5'-phospho-(deoxyribonucleotide)m = (deoxyribonucleotide)n+m + AMP + diphosphate.. Functionally, DNA ligase involved in DNA non-homologous end joining (NHEJ); required for double-strand break (DSB) repair. This is DNA ligase 4 (lig4) from Emericella nidulans (strain FGSC A4 / ATCC 38163 / CBS 112.46 / NRRL 194 / M139) (Aspergillus nidulans).